The primary structure comprises 172 residues: 18.6 kDa class III heat shock protein (172 aa).

The tract at residues 29–54 is disordered; that stretch reads RRSAGDHAHHAAHGHGQHRISGIGGG. The sHSP domain occupies 48-172; sequence ISGIGGGAPV…KTKSVQVTIA (125 aa).

Belongs to the small heat shock protein (HSP20) family. May form oligomeric structures.

Its subcellular location is the cytoplasm. This Oryza sativa subsp. japonica (Rice) protein is 18.6 kDa class III heat shock protein (HSP18.6).